The following is a 679-amino-acid chain: MNNYKLQAPYQPNGDQPKAIKKLVQGVNSGEEFQTLLGATGTGKTFTIANVIQQTGRPALILAHNKTLAAQLCNELRQFFPKNAVEYFISYYDYYQPEAYVPVSDTYIAKTASINEEIDMLRHSATRSLFERKDVIVVASISCIYGLGIPSEYLKAAVKFAVGESIDLRSSLRALVDNQYTRNDTEITRGRFRIKGDVLEIGPAYEDRLIRIELFGDEIEAIRFVDPLTGEILESLDQVSVYPAKHFVTPKERLDSAISAIRNELKEQLDKFAYEGKLLEAQRLEQRTKYDLEMLREVGYCNGVENYARHLAGREEGTPPECLIDYFPKDWLLVVDESHVTCPQLHAMYNGDQARKKVLIDHGFRLPSAADNRPLKCEEFWEKSRQTLFISATPGQWELDQCEGKFIEQVIRPTGVLDPIIDVRPSDGQIDDLLSEIRVRAKKNQRVLVTTLTKRMAEDLTDFLSDNKVRVRYLHSEIHSIERIEIIQDLRLGEYDVLVGVNLLREGLDLPEVSLVAILDADKEGFLRAERSLIQTIGRAARHVEGVALLYADNFTESMKRAISETDRRRTIQKKYNQINGITPKPAGKKIENSILSFLELSRKLDTGGLSKDLINIVSNKTDDILNAKDNQCLLDEMPSLIDKLENKMKDAAKELNFEEAANLRDRIKKLRQKLSRNT.

The Helicase ATP-binding domain maps to 25 to 412 (QGVNSGEEFQ…EGKFIEQVIR (388 aa)). 38–45 (GATGTGKT) provides a ligand contact to ATP. The Beta-hairpin motif lies at 91–114 (YYDYYQPEAYVPVSDTYIAKTASI). Residues 429-583 (QIDDLLSEIR…KKYNQINGIT (155 aa)) enclose the Helicase C-terminal domain. The UVR domain maps to 639–674 (PSLIDKLENKMKDAAKELNFEEAANLRDRIKKLRQK).

It belongs to the UvrB family. In terms of assembly, forms a heterotetramer with UvrA during the search for lesions. Interacts with UvrC in an incision complex.

It is found in the cytoplasm. The UvrABC repair system catalyzes the recognition and processing of DNA lesions. A damage recognition complex composed of 2 UvrA and 2 UvrB subunits scans DNA for abnormalities. Upon binding of the UvrA(2)B(2) complex to a putative damaged site, the DNA wraps around one UvrB monomer. DNA wrap is dependent on ATP binding by UvrB and probably causes local melting of the DNA helix, facilitating insertion of UvrB beta-hairpin between the DNA strands. Then UvrB probes one DNA strand for the presence of a lesion. If a lesion is found the UvrA subunits dissociate and the UvrB-DNA preincision complex is formed. This complex is subsequently bound by UvrC and the second UvrB is released. If no lesion is found, the DNA wraps around the other UvrB subunit that will check the other stand for damage. This Prochlorococcus marinus subsp. pastoris (strain CCMP1986 / NIES-2087 / MED4) protein is UvrABC system protein B.